The following is a 266-amino-acid chain: Tryptophan synthase alpha chain (266 aa).

Residues E49 and D60 each act as proton acceptor in the active site.

It belongs to the TrpA family. Tetramer of two alpha and two beta chains.

It carries out the reaction (1S,2R)-1-C-(indol-3-yl)glycerol 3-phosphate + L-serine = D-glyceraldehyde 3-phosphate + L-tryptophan + H2O. It functions in the pathway amino-acid biosynthesis; L-tryptophan biosynthesis; L-tryptophan from chorismate: step 5/5. Its function is as follows. The alpha subunit is responsible for the aldol cleavage of indoleglycerol phosphate to indole and glyceraldehyde 3-phosphate. This Chloroflexus aurantiacus (strain ATCC 29364 / DSM 637 / Y-400-fl) protein is Tryptophan synthase alpha chain.